We begin with the raw amino-acid sequence, 141 residues long: Large ribosomal subunit protein uL11 (141 aa).

This sequence belongs to the universal ribosomal protein uL11 family. Part of the ribosomal stalk of the 50S ribosomal subunit. Interacts with L10 and the large rRNA to form the base of the stalk. L10 forms an elongated spine to which L12 dimers bind in a sequential fashion forming a multimeric L10(L12)X complex. Post-translationally, one or more lysine residues are methylated.

Functionally, forms part of the ribosomal stalk which helps the ribosome interact with GTP-bound translation factors. In Tropheryma whipplei (strain TW08/27) (Whipple's bacillus), this protein is Large ribosomal subunit protein uL11.